Here is a 1022-residue protein sequence, read N- to C-terminus: ATPase MORC2B (1022 aa).

An N-acetylalanine modification is found at A2. ATP-binding positions include N39, 87–89, and 99–105; these read SAK and RYGNGLK. Mg(2+) is bound at residue N39. The stretch at 285 to 362 forms a coiled coil; sequence KTRAEQEVKK…RDAKQQALKE (78 aa). ATP is bound at residue K427. A CW-type zinc finger spans residues 490–544; that stretch reads AMQVPTTIQCDLCLKWRTLPFQLSAVEEGYPINWVCSMNPDPEQDQCEAFELKQK. Zn(2+) is bound by residues C499, C502, C525, and C536. The stretch at 555–583 forms a coiled coil; it reads KTQEERQKQLTEKIQQEQRKLKALKKIKP. A Phosphoserine modification is found at S615. A Glycyl lysine isopeptide (Lys-Gly) (interchain with G-Cter in SUMO2) cross-link involves residue K649. 4 positions are modified to phosphoserine: S690, S724, S733, and S737. K758 participates in a covalent cross-link: Glycyl lysine isopeptide (Lys-Gly) (interchain with G-Cter in SUMO2). S768 and S770 each carry phosphoserine. T827 is subject to Phosphothreonine. A phosphoserine mark is found at S846 and S851. K922 participates in a covalent cross-link: Glycyl lysine isopeptide (Lys-Gly) (interchain with G-Cter in SUMO2). A coiled-coil region spans residues 962 to 1001; it reads QAKVSEESLRISQKKLQETEEKLQKLRTNIQTLLQMAQQG.

As to quaternary structure, interacts with Morc2a. As to expression, protein is abundant in testes but not detected in other adult tissues examined (at protein level). Detected in germ cells with a distinct developmental-specific expression pattern but not in somatic cells such as Sertoli cells.

It localises to the nucleus. It catalyses the reaction ATP + H2O = ADP + phosphate + H(+). In terms of biological role, required for chromosomal synapsis and meiotic recombination in males and females. The protein is ATPase MORC2B of Mus musculus (Mouse).